The sequence spans 376 residues: MTAQHPSPSARFTGDANPYGGGDPYADYRTADFPFTQYANLADRQLGAGVIAANDEFFAQRENLLVAGRAEFDPEHFGHKGKIMDGWETRRRRGASAAHPWPTAEDHDWALVRLGAPGVVRGVVVDTAHFRGNYPQAVSVEGASVPGSPSPEELLAGDVKWMTLVPRTAVGGHAANGFEVSVEQRFTHLRVNQHPDGGIARLRVYGEAVPDPVWLAALGTFDVVALENGGRVEDASNLFYSPATNTIQPGRSRQMDDGWETRRRRDHGNDWIRYQLVARSEIRAIEIDTAYLKGNSAGWAAVSVKDGESGEWTEILPRTRLQPDTNHRFTLAAPVAGTHARVDIFPDGGISRLRLFGSLTEEGAARLTARYQELGG.

Belongs to the allantoicase family.

It carries out the reaction allantoate + H2O = (S)-ureidoglycolate + urea. The protein operates within nitrogen metabolism; (S)-allantoin degradation; (S)-ureidoglycolate from allantoate (aminidohydrolase route): step 1/1. This is Probable allantoicase from Streptomyces avermitilis (strain ATCC 31267 / DSM 46492 / JCM 5070 / NBRC 14893 / NCIMB 12804 / NRRL 8165 / MA-4680).